Reading from the N-terminus, the 123-residue chain is Defensin beta 118 (123 aa).

The first 19 residues, 1–19, serve as a signal peptide directing secretion; that stretch reads MKLLLLALPVLVLLPQVIP. Disulfide bonds link cysteine 27-cysteine 54, cysteine 34-cysteine 48, and cysteine 38-cysteine 55. Residues 65–123 constitute a propeptide that is removed on maturation; it reads VPMTSPTPLSDSTPGIIDDILTVRFTTDYFEVSSKKDMVEESEAGRGTETSLPNVHHSS. Residues 100-110 show a composition bias toward basic and acidic residues; it reads KDMVEESEAGR. The segment at 100–123 is disordered; that stretch reads KDMVEESEAGRGTETSLPNVHHSS. Residues 112–123 show a composition bias toward polar residues; sequence TETSLPNVHHSS.

The protein belongs to the beta-defensin family. Post-translationally, the three-dimensional structure formed by the three intramolecular disulfide bridges is indispensable for antimicrobial activity.

The protein localises to the secreted. In terms of biological role, host defense peptide that exhibits antimicrobial activity against both Gram-negative bacteria, such as E.coli and S.typhimurium, and Gram-positive bacteria, such as S.aureus and B.subtilis. Inhibits cell adhesion of E.coli on intestinal epithelial enterocytes. Causes rapid permeabilization of both the outer and inner membrane of E.coli, leading to morphological alterations on the bacterial surface. Binds to bacterial lipopolysaccharides (LPS) with high affinity, and may thereby be involved in immunoregulation through LPS neutralization. May contribute to epididymal innate immunity and protect the sperm against attack by microorganisms. This Pan troglodytes (Chimpanzee) protein is Defensin beta 118 (DEFB118).